Consider the following 327-residue polypeptide: Cytochrome c oxidase subunit 2 (327 aa).

Residues 1–23 (MEQIPASIWTLTAGVVVTLISFW) form the signal peptide. 2 helical membrane-spanning segments follow: residues 56–78 (LFLV…AGEE) and 96–114 (AIPA…DIFQ). H221, C255, C259, and H263 together coordinate Cu cation.

It belongs to the cytochrome c oxidase subunit 2 family. Cu cation is required as a cofactor.

Its subcellular location is the cell membrane. The enzyme catalyses 4 Fe(II)-[cytochrome c] + O2 + 8 H(+)(in) = 4 Fe(III)-[cytochrome c] + 2 H2O + 4 H(+)(out). Functionally, subunits I and II form the functional core of the enzyme complex. Electrons originating in cytochrome c are transferred via heme a and Cu(A) to the binuclear center formed by heme a3 and Cu(B). This Thermostichus vulcanus (Synechococcus vulcanus) protein is Cytochrome c oxidase subunit 2 (ctaC).